A 576-amino-acid polypeptide reads, in one-letter code: Sulfite reductase [NADPH] hemoprotein beta-component (576 aa).

Residues Cys-434, Cys-440, Cys-479, and Cys-483 each coordinate [4Fe-4S] cluster. Cys-483 is a siroheme binding site.

It belongs to the nitrite and sulfite reductase 4Fe-4S domain family. Alpha(8)-beta(8). The alpha component is a flavoprotein, the beta component is a hemoprotein. Siroheme serves as cofactor. It depends on [4Fe-4S] cluster as a cofactor.

It carries out the reaction hydrogen sulfide + 3 NADP(+) + 3 H2O = sulfite + 3 NADPH + 4 H(+). It participates in sulfur metabolism; hydrogen sulfide biosynthesis; hydrogen sulfide from sulfite (NADPH route): step 1/1. In terms of biological role, component of the sulfite reductase complex that catalyzes the 6-electron reduction of sulfite to sulfide. This is one of several activities required for the biosynthesis of L-cysteine from sulfate. This Oceanobacillus iheyensis (strain DSM 14371 / CIP 107618 / JCM 11309 / KCTC 3954 / HTE831) protein is Sulfite reductase [NADPH] hemoprotein beta-component.